The sequence spans 180 residues: Shikimate kinase (180 aa).

14 to 19 is an ATP binding site; sequence GAGKTC. Mg(2+) is bound at residue Thr18. Residues Asp36, Arg60, and Gly82 each contribute to the substrate site. Arg120 provides a ligand contact to ATP. Arg139 contributes to the substrate binding site.

This sequence belongs to the shikimate kinase family. As to quaternary structure, monomer. Mg(2+) is required as a cofactor.

The protein resides in the cytoplasm. It carries out the reaction shikimate + ATP = 3-phosphoshikimate + ADP + H(+). The protein operates within metabolic intermediate biosynthesis; chorismate biosynthesis; chorismate from D-erythrose 4-phosphate and phosphoenolpyruvate: step 5/7. Catalyzes the specific phosphorylation of the 3-hydroxyl group of shikimic acid using ATP as a cosubstrate. This is Shikimate kinase from Stenotrophomonas maltophilia (strain R551-3).